The sequence spans 387 residues: F-box protein At5g41490 (387 aa).

Residues 2–47 (ATMITNLRRDLIEEIISRVPLRSMKAVRLTCKSWNNISKSEIFTKM) form the F-box domain.

This Arabidopsis thaliana (Mouse-ear cress) protein is F-box protein At5g41490.